The following is a 616-amino-acid chain: MAWGLFQILMISFFHLIKLSSQQETSFVYETFRSQENLYLDGSATVLPNGLLQLTNASDHQMAHVFYKDSIELSSSKPLSFSTHFVCALVPQPGVEGGHGMAFVVSPSMDFSHAESTRYLGIFNVSKNGSPSSNVLAVELDTIWNPDFEDIDHNHVGIDVNSPLSVGTASASYYSDIKGKNESINLLSGHPIQVWVDYEDNMLNVSMAPREVQKPSRPLLSQHINLSDIYPNRRLFVGFSAATGTAISYQYVLSWSFSTSRGSLQRFDISRLPEVPHPRAEHKNLSPLFIDLLGFLAIMGLCTLTGMYFFKRGKYAEITEEWENEFGAHRFSYKSLYKATKGFHKDGFLGKGGFGEVYRGKLLLSREKAVKRMSHDGDQGLKQFVAEVVSMRCLKHRNLVPLLGYCRRKHEFLLVSDYMTNGSLDEHLFDDQKPVLSWPQRLVIIKGIASALCYLHTGADQVVLHRDIKASNIMLDAEFNGRLGDFGMASFHDHGGISDSTCAVGTIGYMAPEILYMGASTRTDVYAFGVFMVEVTCGRRPVEPQLQLEKQILIEWVPESRPTMEQVILYLNQNLPLPDFSPYTVGISNHSSVLIDAASLVASRSWSAASSATNSP.

A signal peptide spans 1 to 22 (MAWGLFQILMISFFHLIKLSSQ). Residues 23–288 (QETSFVYETF…RAEHKNLSPL (266 aa)) are Extracellular-facing. The legume-lectin like stretch occupies residues 24-258 (ETSFVYETFR…YQYVLSWSFS (235 aa)). Asn56, Asn124, Asn181, Asn204, and Asn225 each carry an N-linked (GlcNAc...) asparagine glycan. The helical transmembrane segment at 289–309 (FIDLLGFLAIMGLCTLTGMYF) threads the bilayer. Residues 310–616 (FKRGKYAEIT…SAASSATNSP (307 aa)) lie on the Cytoplasmic side of the membrane. In terms of domain architecture, Protein kinase spans 343 to 616 (FHKDGFLGKG…SAASSATNSP (274 aa)). ATP contacts are provided by residues 349-357 (LGKGGFGEV) and Lys371. The active-site Proton acceptor is Asp467.

The protein in the C-terminal section; belongs to the protein kinase superfamily. Ser/Thr protein kinase family. In the N-terminal section; belongs to the leguminous lectin family.

The protein resides in the cell membrane. The catalysed reaction is L-seryl-[protein] + ATP = O-phospho-L-seryl-[protein] + ADP + H(+). It carries out the reaction L-threonyl-[protein] + ATP = O-phospho-L-threonyl-[protein] + ADP + H(+). This is Putative L-type lectin-domain containing receptor kinase I.10 (LECRK110) from Arabidopsis thaliana (Mouse-ear cress).